Reading from the N-terminus, the 353-residue chain is Dihydroorotate dehydrogenase (quinone) (353 aa).

Residues 66–70 (AGFDK) and Thr90 contribute to the FMN site. Substrate is bound at residue Lys70. 115-119 (NRMGF) provides a ligand contact to substrate. Residues Asn143 and Asn176 each contribute to the FMN site. Asn176 lines the substrate pocket. The Nucleophile role is filled by Ser179. Asn181 is a binding site for substrate. FMN is bound by residues Lys212 and Thr240. A substrate-binding site is contributed by 241 to 242 (NT). Residues Gly264, Gly293, and 314-315 (YT) contribute to the FMN site.

The protein belongs to the dihydroorotate dehydrogenase family. Type 2 subfamily. As to quaternary structure, monomer. It depends on FMN as a cofactor.

It localises to the cell membrane. It catalyses the reaction (S)-dihydroorotate + a quinone = orotate + a quinol. It participates in pyrimidine metabolism; UMP biosynthesis via de novo pathway; orotate from (S)-dihydroorotate (quinone route): step 1/1. Its function is as follows. Catalyzes the conversion of dihydroorotate to orotate with quinone as electron acceptor. In Mycolicibacterium vanbaalenii (strain DSM 7251 / JCM 13017 / BCRC 16820 / KCTC 9966 / NRRL B-24157 / PYR-1) (Mycobacterium vanbaalenii), this protein is Dihydroorotate dehydrogenase (quinone).